We begin with the raw amino-acid sequence, 173 residues long: NADH-ubiquinone oxidoreductase chain 6 (173 aa).

A run of 6 helical transmembrane segments spans residues 1–21 (MIYF…AVAS), 27–47 (FAAL…VGYG), 53–73 (LVLF…SAAL), 82–102 (WGSW…LLVG), 106–126 (YGWW…MSVL), and 141–161 (GFLL…VLEI).

It belongs to the complex I subunit 6 family.

The protein resides in the mitochondrion membrane. It carries out the reaction a ubiquinone + NADH + 5 H(+)(in) = a ubiquinol + NAD(+) + 4 H(+)(out). Its function is as follows. Core subunit of the mitochondrial membrane respiratory chain NADH dehydrogenase (Complex I) that is believed to belong to the minimal assembly required for catalysis. Complex I functions in the transfer of electrons from NADH to the respiratory chain. The immediate electron acceptor for the enzyme is believed to be ubiquinone. The chain is NADH-ubiquinone oxidoreductase chain 6 (MT-ND6) from Latimeria chalumnae (Coelacanth).